The following is a 584-amino-acid chain: Putative sel1-like repeat-containing protein L18 (584 aa).

6 Sel1-like repeats span residues 132-167 (SMAQ…DQNN), 168-203 (KYGL…CQNF), 204-237 (SKAQ…NQNH), 238-273 (SSAQ…SQGL), 274-309 (NSAK…YDDG), and 316-351 (EVAM…NTKN).

In Acanthamoeba polyphaga (Amoeba), this protein is Putative sel1-like repeat-containing protein L18.